Here is a 467-residue protein sequence, read N- to C-terminus: Thiohydroximate-O-sulfate sulfur/sulfate-lyase (nitrile-forming) NSP3 (467 aa).

A Jacalin-type lectin domain is found at 2–143; that stretch reads AQKLVAQGGE…LHSLGAYVSL (142 aa). 5 Kelch repeats span residues 177 to 225, 230 to 276, 280 to 329, 331 to 375, and 379 to 434; these read KIYS…VRMV, TLYT…SMAA, NVYV…VVQG, VWIV…ASAA, and HIVI…ASTT. The active-site Proton donor is the R237. The a (Z)-N-(sulfonatooxy)alkanimidothioate site is built by R237, S270, R292, G321, and V370. Catalysis depends on R292, which acts as the Proton donor. 3 residues coordinate Fe(2+): E386, D390, and H394. W429 provides a ligand contact to a (Z)-N-(sulfonatooxy)alkanimidothioate.

The protein belongs to the jacalin lectin family. It depends on Fe(2+) as a cofactor. In terms of tissue distribution, mainly expressed in roots, and, at low levels, in seedlings and leaves. Observed in seeds.

It catalyses the reaction a (Z)-N-(sulfonatooxy)alkanimidothioate = a nitrile + sulfur + sulfate. The enzyme catalyses (Z)-phenyl-N-(sulfonatooxy)methanimidothioate = phenylacetonitrile + sulfur + sulfate. It carries out the reaction (Z)-N-(sulfonatooxy)prop-2-enimidothioate = but-3-enenitrile + sulfur + sulfate. Functionally, specifier protein responsible for constitutive and herbivore-induced simple nitrile formation, especially in roots. Promotes simple nitriles, but not epithionitrile or thiocyanate formation. Converts allylglucosinolate and benzylglucosinolate (glucotropaeolin) to their corresponding simple nitriles in the presence of myrosinase. This is Thiohydroximate-O-sulfate sulfur/sulfate-lyase (nitrile-forming) NSP3 from Arabidopsis thaliana (Mouse-ear cress).